A 610-amino-acid chain; its full sequence is Sterol O-acyltransferase 1 (610 aa).

S21 and S45 each carry phosphoserine. The disordered stretch occupies residues 41 to 81 (SMEVSPRSSTTSLVEPVESTEGVESTEAERVAGKQEQEEEY). Residues 67 to 76 (EAERVAGKQE) show a composition bias toward basic and acidic residues. A run of 5 helical transmembrane segments spans residues 182–202 (LESNFSGIYVFAWMFLGWIAI), 229–249 (LFTIAMLDLAMFLCTFFVVFV), 264–284 (GFVAVSIFELAFIPVTFPIYV), 371–391 (ISCSNFFMFCLFPVLVYQINY), and 409–429 (IIGTIFLMMVTAQFFMHPVAM). Residues 491-497 (FYGDWWN) carry the FYXDWWN motif motif. The next 2 membrane-spanning stretches (helical) occupy residues 535 to 555 (ATLFTFFLSAVFHEMAMFAIF) and 590 to 610 (VVFSFGVCSGPSIIMTLYLTL). Residue H547 is part of the active site.

Belongs to the membrane-bound acyltransferase family. Sterol o-acyltransferase subfamily.

It is found in the endoplasmic reticulum membrane. The catalysed reaction is lanosterol + an acyl-CoA = lanosteryl ester + CoA. In terms of biological role, sterol O-acyltransferase that catalyzes the formation of stery esters. The chain is Sterol O-acyltransferase 1 from Saccharomyces cerevisiae (strain ATCC 204508 / S288c) (Baker's yeast).